A 360-amino-acid chain; its full sequence is MKASLLNKLDTLQDRFEELTALLGDAEVISDQARFRAYSREYSEVEPVIGAYKEWRKVQDDLEGAQALLKDADPDMREMAVEEVREAKEQLVGLESQLQRMLLPKDPNDGRNVFLEIRAGTGGDEAAIFSGDLFRMYSRYAERRGWRLEILSENEGEHGGYKEIIARVEGDSVYGKLKFESGAHRVQRVPETESQGRIHTSACTVAVLPEPDEQVAIEINPADLRVDTYRASGAGGQHVNKTDSAIRITHLPTGIVVECQEERSQHKNRARAMSWLSAKLNDMQTSAAQNAIASERKLLVGSGDRSERIRTYNYPQGRVTDHRINLTLYSLDDILAGGVDAVIEPLLAEYQADQLAALGD.

Residue Gln-237 is modified to N5-methylglutamine.

This sequence belongs to the prokaryotic/mitochondrial release factor family. Methylated by PrmC. Methylation increases the termination efficiency of RF1.

Its subcellular location is the cytoplasm. Functionally, peptide chain release factor 1 directs the termination of translation in response to the peptide chain termination codons UAG and UAA. This Pseudomonas putida (strain W619) protein is Peptide chain release factor 1.